The following is a 364-amino-acid chain: GTPase Obg (364 aa).

One can recognise an Obg domain in the interval 1-161 (MRFVDEVTIS…KYLRLELKIL (161 aa)). Positions 162–334 (ADAGIIGLPN…LVDAIWKLQS (173 aa)) constitute an OBG-type G domain. GTP-binding positions include 168–175 (GLPNAGKS), 193–197 (FTTLN), 217–220 (DIPG), 287–290 (NKID), and 315–317 (SAE). Residues Ser-175 and Thr-195 each contribute to the Mg(2+) site.

This sequence belongs to the TRAFAC class OBG-HflX-like GTPase superfamily. OBG GTPase family. As to quaternary structure, monomer. The cofactor is Mg(2+).

It is found in the cytoplasm. Functionally, an essential GTPase which binds GTP, GDP and possibly (p)ppGpp with moderate affinity, with high nucleotide exchange rates and a fairly low GTP hydrolysis rate. Plays a role in control of the cell cycle, stress response, ribosome biogenesis and in those bacteria that undergo differentiation, in morphogenesis control. In Lawsonia intracellularis (strain PHE/MN1-00), this protein is GTPase Obg.